We begin with the raw amino-acid sequence, 1373 residues long: DNA-directed RNA polymerase subunit beta (1373 aa).

This sequence belongs to the RNA polymerase beta chain family. In terms of assembly, the RNAP catalytic core consists of 2 alpha, 1 beta, 1 beta' and 1 omega subunit. When a sigma factor is associated with the core the holoenzyme is formed, which can initiate transcription.

The catalysed reaction is RNA(n) + a ribonucleoside 5'-triphosphate = RNA(n+1) + diphosphate. Its function is as follows. DNA-dependent RNA polymerase catalyzes the transcription of DNA into RNA using the four ribonucleoside triphosphates as substrates. This Lawsonia intracellularis (strain PHE/MN1-00) protein is DNA-directed RNA polymerase subunit beta.